A 154-amino-acid polypeptide reads, in one-letter code: NADPH-dependent 7-cyano-7-deazaguanine reductase (154 aa).

Over residues 1–13 (MSVTDVSGLSQLG) the composition is skewed to polar residues. Positions 1–30 (MSVTDVSGLSQLGTKVDTPESPEKAVLEKV) are disordered. Basic and acidic residues predominate over residues 17–27 (DTPESPEKAVL). The active-site Thioimide intermediate is the Cys-52. Residue Asp-59 is the Proton donor of the active site. Substrate is bound by residues 74–76 (VES) and 93–94 (HE).

This sequence belongs to the GTP cyclohydrolase I family. QueF type 1 subfamily.

It localises to the cytoplasm. The catalysed reaction is 7-aminomethyl-7-carbaguanine + 2 NADP(+) = 7-cyano-7-deazaguanine + 2 NADPH + 3 H(+). It participates in tRNA modification; tRNA-queuosine biosynthesis. Its function is as follows. Catalyzes the NADPH-dependent reduction of 7-cyano-7-deazaguanine (preQ0) to 7-aminomethyl-7-deazaguanine (preQ1). This chain is NADPH-dependent 7-cyano-7-deazaguanine reductase, found in Agrobacterium fabrum (strain C58 / ATCC 33970) (Agrobacterium tumefaciens (strain C58)).